The following is a 360-amino-acid chain: Phosphoserine aminotransferase (360 aa).

Residue R41 coordinates L-glutamate. Residues 75–76, W99, T152, D171, and Q194 each bind pyridoxal 5'-phosphate; that span reads AS. The residue at position 195 (K195) is an N6-(pyridoxal phosphate)lysine. A pyridoxal 5'-phosphate-binding site is contributed by 236-237; the sequence is NT.

It belongs to the class-V pyridoxal-phosphate-dependent aminotransferase family. SerC subfamily. As to quaternary structure, homodimer. It depends on pyridoxal 5'-phosphate as a cofactor.

It localises to the cytoplasm. It carries out the reaction O-phospho-L-serine + 2-oxoglutarate = 3-phosphooxypyruvate + L-glutamate. It catalyses the reaction 4-(phosphooxy)-L-threonine + 2-oxoglutarate = (R)-3-hydroxy-2-oxo-4-phosphooxybutanoate + L-glutamate. Its pathway is amino-acid biosynthesis; L-serine biosynthesis; L-serine from 3-phospho-D-glycerate: step 2/3. It functions in the pathway cofactor biosynthesis; pyridoxine 5'-phosphate biosynthesis; pyridoxine 5'-phosphate from D-erythrose 4-phosphate: step 3/5. Functionally, catalyzes the reversible conversion of 3-phosphohydroxypyruvate to phosphoserine and of 3-hydroxy-2-oxo-4-phosphonooxybutanoate to phosphohydroxythreonine. This Porphyromonas gingivalis (strain ATCC 33277 / DSM 20709 / CIP 103683 / JCM 12257 / NCTC 11834 / 2561) protein is Phosphoserine aminotransferase.